We begin with the raw amino-acid sequence, 299 residues long: Pyridoxal 5'-phosphate synthase subunit PdxS (299 aa).

Asp24 provides a ligand contact to D-ribose 5-phosphate. Lys81 acts as the Schiff-base intermediate with D-ribose 5-phosphate in catalysis. Gly153 provides a ligand contact to D-ribose 5-phosphate. Arg165 provides a ligand contact to D-glyceraldehyde 3-phosphate. D-ribose 5-phosphate is bound by residues Gly219 and 240-241; that span reads GS.

It belongs to the PdxS/SNZ family. In the presence of PdxT, forms a dodecamer of heterodimers.

It catalyses the reaction aldehydo-D-ribose 5-phosphate + D-glyceraldehyde 3-phosphate + L-glutamine = pyridoxal 5'-phosphate + L-glutamate + phosphate + 3 H2O + H(+). It functions in the pathway cofactor biosynthesis; pyridoxal 5'-phosphate biosynthesis. Functionally, catalyzes the formation of pyridoxal 5'-phosphate from ribose 5-phosphate (RBP), glyceraldehyde 3-phosphate (G3P) and ammonia. The ammonia is provided by the PdxT subunit. Can also use ribulose 5-phosphate and dihydroxyacetone phosphate as substrates, resulting from enzyme-catalyzed isomerization of RBP and G3P, respectively. This is Pyridoxal 5'-phosphate synthase subunit PdxS from Methanococcus maripaludis (strain C5 / ATCC BAA-1333).